Reading from the N-terminus, the 155-residue chain is 17.4 kDa class III heat shock protein (155 aa).

The sHSP domain occupies 35–155 (GRGSSNNIPI…KPKTVQIAVS (121 aa)).

The protein belongs to the small heat shock protein (HSP20) family. In terms of assembly, may form oligomeric structures.

The protein resides in the cytoplasm. The protein is 17.4 kDa class III heat shock protein (HSP17.4B) of Arabidopsis thaliana (Mouse-ear cress).